Here is a 157-residue protein sequence, read N- to C-terminus: Probable succinate transporter subunit YjjB (157 aa).

4 helical membrane-spanning segments follow: residues 2 to 22 (GIIS…IPAV), 55 to 75 (AGFN…SIGI), 87 to 107 (IFTV…TAMI), and 129 to 149 (FLKA…PGLW).

The protein belongs to the ThrE exporter (TC 2.A.79) family. In terms of assembly, the transporter is composed of YjjB and YjjP.

It localises to the cell inner membrane. Its function is as follows. Involved in succinate export with YjjP. Both proteins are required for export. In Klebsiella pneumoniae subsp. pneumoniae (strain ATCC 700721 / MGH 78578), this protein is Probable succinate transporter subunit YjjB.